We begin with the raw amino-acid sequence, 116 residues long: MMSKIVLVGLVGSAAAFNAPMMTVRRDAIATGAAAAVVAPILRPAGAAMKKNSKAPCVTIFDERDGCGGPTRAKTGAGEEGLMVKIQMQEIKLGRGAGAEYVSIFTNYDKKLFGVK.

(2R,3E)-phycoerythrobilin-binding residues include serine 53, glutamate 63, arginine 64, cysteine 67, and lysine 85.

This sequence belongs to the phycoerythrin family. As to quaternary structure, heterotetramer of 2 different alpha chains and 2 identical beta chains which form 2 alpha-beta heterodimers within the heterotetramer. The two alpha-beta heterodimers are rotated to an open configuration in contrast to the closed configuration found in other cryptophyte species due to the insertion of a single amino acid, Asp-65, in a conserved region of the alpha chain. In the open form, the central chromophores are not in physical contact but are separated by a water-filled channel. Post-translationally, contains three phycoerythrobilin chromophores with binding mediated by both the alpha and beta subunits.

The protein localises to the plastid. Its subcellular location is the chloroplast thylakoid membrane. Light-harvesting photosynthetic tetrapyrrole chromophore-protein from the phycobiliprotein complex. In Hemiselmis andersenii (Cryptophyte alga), this protein is Phycoerythrin alpha-3 subunit.